The following is a 142-amino-acid chain: FAD synthase (142 aa).

Residues 9–10 (TF), 14–17 (HPGH), and Asp-92 contribute to the ATP site.

It belongs to the archaeal FAD synthase family. As to quaternary structure, homodimer. A divalent metal cation is required as a cofactor.

The catalysed reaction is FMN + ATP + H(+) = FAD + diphosphate. It participates in cofactor biosynthesis; FAD biosynthesis; FAD from FMN: step 1/1. Functionally, catalyzes the transfer of the AMP portion of ATP to flavin mononucleotide (FMN) to produce flavin adenine dinucleotide (FAD) coenzyme. The chain is FAD synthase from Halalkalicoccus jeotgali (strain DSM 18796 / CECT 7217 / JCM 14584 / KCTC 4019 / B3).